Reading from the N-terminus, the 101-residue chain is Small ribosomal subunit protein bS21 (101 aa).

Residues 36–52 (YEKPSEKKAREKAEAVR) show a composition bias toward basic and acidic residues. Residues 36-101 (YEKPSEKKAR…GPGAGPRGPR (66 aa)) form a disordered region. Residues 53–62 (RARKLARKKL) are compositionally biased toward basic residues. Residues 83–101 (PGAGGPGAGGPGAGPRGPR) show a composition bias toward gly residues.

This sequence belongs to the bacterial ribosomal protein bS21 family.

The polypeptide is Small ribosomal subunit protein bS21 (Rhodopseudomonas palustris (strain HaA2)).